Here is a 229-residue protein sequence, read N- to C-terminus: Cytochrome c oxidase subunit 2 (229 aa).

Residues 1–14 are Mitochondrial intermembrane-facing; the sequence is MANHLQFNFQDATS. The chain crosses the membrane as a helical span at residues 15-45; it reads PLMQELVKFHDHSLTILFFISALILYVLMMT. Over 46–59 the chain is Mitochondrial matrix; the sequence is SLSKLTNKNILDSQ. A helical membrane pass occupies residues 60-87; it reads EIEMVWTVIPAFILIMLALPSIQILYLM. Topologically, residues 88–229 are mitochondrial intermembrane; that stretch reads DEIASPDITI…FESWIIKLSL (142 aa). Residues histidine 162, cysteine 197, glutamate 199, cysteine 201, histidine 205, and methionine 208 each contribute to the Cu cation site. Glutamate 199 contacts Mg(2+).

It belongs to the cytochrome c oxidase subunit 2 family. As to quaternary structure, component of the cytochrome c oxidase (complex IV, CIV), a multisubunit enzyme composed of 14 subunits. The complex is composed of a catalytic core of 3 subunits MT-CO1, MT-CO2 and MT-CO3, encoded in the mitochondrial DNA, and 11 supernumerary subunits COX4I, COX5A, COX5B, COX6A, COX6B, COX6C, COX7A, COX7B, COX7C, COX8 and NDUFA4, which are encoded in the nuclear genome. The complex exists as a monomer or a dimer and forms supercomplexes (SCs) in the inner mitochondrial membrane with NADH-ubiquinone oxidoreductase (complex I, CI) and ubiquinol-cytochrome c oxidoreductase (cytochrome b-c1 complex, complex III, CIII), resulting in different assemblies (supercomplex SCI(1)III(2)IV(1) and megacomplex MCI(2)III(2)IV(2)). Found in a complex with TMEM177, COA6, COX18, COX20, SCO1 and SCO2. Interacts with TMEM177 in a COX20-dependent manner. Interacts with COX20. Interacts with COX16. It depends on Cu cation as a cofactor.

The protein localises to the mitochondrion inner membrane. It catalyses the reaction 4 Fe(II)-[cytochrome c] + O2 + 8 H(+)(in) = 4 Fe(III)-[cytochrome c] + 2 H2O + 4 H(+)(out). Component of the cytochrome c oxidase, the last enzyme in the mitochondrial electron transport chain which drives oxidative phosphorylation. The respiratory chain contains 3 multisubunit complexes succinate dehydrogenase (complex II, CII), ubiquinol-cytochrome c oxidoreductase (cytochrome b-c1 complex, complex III, CIII) and cytochrome c oxidase (complex IV, CIV), that cooperate to transfer electrons derived from NADH and succinate to molecular oxygen, creating an electrochemical gradient over the inner membrane that drives transmembrane transport and the ATP synthase. Cytochrome c oxidase is the component of the respiratory chain that catalyzes the reduction of oxygen to water. Electrons originating from reduced cytochrome c in the intermembrane space (IMS) are transferred via the dinuclear copper A center (CU(A)) of subunit 2 and heme A of subunit 1 to the active site in subunit 1, a binuclear center (BNC) formed by heme A3 and copper B (CU(B)). The BNC reduces molecular oxygen to 2 water molecules using 4 electrons from cytochrome c in the IMS and 4 protons from the mitochondrial matrix. The protein is Cytochrome c oxidase subunit 2 (MT-CO2) of Myxine glutinosa (Atlantic hagfish).